The chain runs to 296 residues: (+)-neomenthol dehydrogenase (296 aa).

NADP(+) is bound at residue 16–40 (RGIGFEICRQLASEGIRVVLTSRDE). Residue Ser-164 coordinates substrate. Tyr-220 (proton acceptor) is an active-site residue.

The protein belongs to the short-chain dehydrogenases/reductases (SDR) family. In terms of assembly, monomer.

The protein localises to the cytoplasm. It catalyses the reaction (+)-neomenthol + NADP(+) = (1R,4S)-menthone + NADPH + H(+). In terms of biological role, aldehyde reductase that catalyzes the reduction of the aldehyde carbonyl groups on saturated and alpha,beta-unsaturated aldehydes with more than 5 carbons. Involved in basal resistance against pathogens. This is (+)-neomenthol dehydrogenase (SDR1) from Arabidopsis thaliana (Mouse-ear cress).